We begin with the raw amino-acid sequence, 319 residues long: Coproporphyrin III ferrochelatase 2 (319 aa).

Fe-coproporphyrin III-binding positions include Y13, R30, 46–47 (RY), S54, and Y125. 2 residues coordinate Fe(2+): H181 and E262.

This sequence belongs to the ferrochelatase family.

The protein resides in the cytoplasm. It catalyses the reaction Fe-coproporphyrin III + 2 H(+) = coproporphyrin III + Fe(2+). The protein operates within porphyrin-containing compound metabolism; protoheme biosynthesis. Its function is as follows. Involved in coproporphyrin-dependent heme b biosynthesis. Catalyzes the insertion of ferrous iron into coproporphyrin III to form Fe-coproporphyrin III. The chain is Coproporphyrin III ferrochelatase 2 from Bacillus anthracis.